A 198-amino-acid polypeptide reads, in one-letter code: Neutrophil gelatinase-associated lipocalin (198 aa).

An N-terminal signal peptide occupies residues 1–20 (MPLGLLWLGLALLGALHAQA). Pyrrolidone carboxylic acid is present on glutamine 21. 72–74 (YAT) contributes to the a carboxymycobactin binding site. Asparagine 85 carries N-linked (GlcNAc...) asparagine glycosylation. Cysteine 96 and cysteine 195 form a disulfide bridge. Enterobactin is bound at residue tyrosine 126. The a carboxymycobactin site is built by lysine 145, lysine 154, and tyrosine 158. Residue lysine 154 coordinates enterobactin.

Belongs to the calycin superfamily. Lipocalin family. As to quaternary structure, monomer. Homodimer; disulfide-linked. Heterodimer; disulfide-linked with MMP9. Detected in neutrophils (at protein level). Expressed in bone marrow and in tissues that are prone to exposure to microorganism. High expression is found in bone marrow as well as in uterus, prostate, salivary gland, stomach, appendix, colon, trachea and lung. Expressed in the medullary tubules of the kidney. Not found in the small intestine or peripheral blood leukocytes.

The protein resides in the secreted. The protein localises to the cytoplasmic granule lumen. Its subcellular location is the cytoplasmic vesicle lumen. Iron-trafficking protein involved in multiple processes such as apoptosis, innate immunity and renal development. Binds iron through association with 2,3-dihydroxybenzoic acid (2,3-DHBA), a siderophore that shares structural similarities with bacterial enterobactin, and delivers or removes iron from the cell, depending on the context. Iron-bound form (holo-24p3) is internalized following binding to the SLC22A17 (24p3R) receptor, leading to release of iron and subsequent increase of intracellular iron concentration. In contrast, association of the iron-free form (apo-24p3) with the SLC22A17 (24p3R) receptor is followed by association with an intracellular siderophore, iron chelation and iron transfer to the extracellular medium, thereby reducing intracellular iron concentration. Involved in apoptosis due to interleukin-3 (IL3) deprivation: iron-loaded form increases intracellular iron concentration without promoting apoptosis, while iron-free form decreases intracellular iron levels, inducing expression of the proapoptotic protein BCL2L11/BIM, resulting in apoptosis. Involved in innate immunity; limits bacterial proliferation by sequestering iron bound to microbial siderophores, such as enterobactin. Can also bind siderophores from M.tuberculosis. The protein is Neutrophil gelatinase-associated lipocalin (LCN2) of Homo sapiens (Human).